The sequence spans 1394 residues: Kinesin-like protein KIF27 (1394 aa).

Positions 5–341 (PIKVAVRIRP…LKYANRARNI (337 aa)) constitute a Kinesin motor domain. 84–91 (GQTGSGKT) is a binding site for ATP. Coiled coils occupy residues 352–418 (QADR…IEQA) and 493–554 (QVVF…ELAK). Disordered regions lie at residues 551 to 583 (ELAKRSSSMPTSTKESCGDGPDARAPEKRPHTA) and 642 to 664 (FSDNSDDEDSEGQEKPRVRSRSH). Residues 555–565 (RSSSMPTSTKE) show a composition bias toward polar residues. Positions 571-580 (PDARAPEKRP) are enriched in basic and acidic residues. Serine 643, serine 646, serine 672, serine 675, and serine 704 each carry phosphoserine. Residues 709–980 (LQKLRTSELI…NKKLRSSQAL (272 aa)) adopt a coiled-coil conformation. The residue at position 999 (serine 999) is a Phosphoserine. Coiled coils occupy residues 1010–1078 (TEEK…SIQN), 1118–1152 (NKVINLREAERKQQLQNKEMKMKVLERDNMVHELE), and 1187–1226 (QDGEGIIETLNKYEDKIQQLEKDLYFYKKTSRDLKKRLKD). Residues 1267 to 1280 (TENTKLNGREKEVD) show a composition bias toward basic and acidic residues. The segment at 1267-1340 (TENTKLNGRE…SQSPPPPQLQ (74 aa)) is disordered. Polar residues-rich tracts occupy residues 1281–1295 (NSSSSLKTPPLTQQI) and 1310–1320 (APSSGQLQSSA). A phosphoserine mark is found at serine 1365 and serine 1387. The disordered stretch occupies residues 1375 to 1394 (SLGAGVRSVTADSLEEPEES).

Belongs to the TRAFAC class myosin-kinesin ATPase superfamily. Kinesin family. KIF27 subfamily. As to quaternary structure, interacts with STK36.

Its subcellular location is the cytoplasm. The protein resides in the cytoskeleton. It is found in the cell projection. It localises to the cilium. Plays an essential role in motile ciliogenesis. The protein is Kinesin-like protein KIF27 (Kif27) of Rattus norvegicus (Rat).